Reading from the N-terminus, the 306-residue chain is Methionyl-tRNA formyltransferase (306 aa).

(6S)-5,6,7,8-tetrahydrofolate is bound at residue 110-113 (SLLP).

It belongs to the Fmt family.

The catalysed reaction is L-methionyl-tRNA(fMet) + (6R)-10-formyltetrahydrofolate = N-formyl-L-methionyl-tRNA(fMet) + (6S)-5,6,7,8-tetrahydrofolate + H(+). Its function is as follows. Attaches a formyl group to the free amino group of methionyl-tRNA(fMet). The formyl group appears to play a dual role in the initiator identity of N-formylmethionyl-tRNA by promoting its recognition by IF2 and preventing the misappropriation of this tRNA by the elongation apparatus. The polypeptide is Methionyl-tRNA formyltransferase (Brucella abortus (strain S19)).